The primary structure comprises 163 residues: Nucleotide-binding protein CGSHiGG_08790 (163 aa).

Belongs to the YajQ family.

Functionally, nucleotide-binding protein. This chain is Nucleotide-binding protein CGSHiGG_08790, found in Haemophilus influenzae (strain PittGG).